We begin with the raw amino-acid sequence, 227 residues long: PKHD-type hydroxylase BURPS668_A1690 (227 aa).

One can recognise a Fe2OG dioxygenase domain in the interval 78-178 (KVFPPLFNRY…RVASFFWIQS (101 aa)). Fe cation contacts are provided by H96, D98, and H159. R169 contacts 2-oxoglutarate.

It depends on Fe(2+) as a cofactor. L-ascorbate is required as a cofactor.

The polypeptide is PKHD-type hydroxylase BURPS668_A1690 (Burkholderia pseudomallei (strain 668)).